We begin with the raw amino-acid sequence, 163 residues long: NADH-quinone oxidoreductase subunit I (163 aa).

4Fe-4S ferredoxin-type domains lie at 53–83 and 94–123; these read LRRYPNGEERCIACKLCEAICPAQAITIEAG and VRYDIDMVKCIYCGFCQEACPVEAIVEGPN. [4Fe-4S] cluster-binding residues include Cys63, Cys66, Cys69, Cys73, Cys103, Cys106, Cys109, and Cys113.

It belongs to the complex I 23 kDa subunit family. In terms of assembly, NDH-1 is composed of 14 different subunits. Subunits NuoA, H, J, K, L, M, N constitute the membrane sector of the complex. Requires [4Fe-4S] cluster as cofactor.

The protein localises to the cell inner membrane. It catalyses the reaction a quinone + NADH + 5 H(+)(in) = a quinol + NAD(+) + 4 H(+)(out). In terms of biological role, NDH-1 shuttles electrons from NADH, via FMN and iron-sulfur (Fe-S) centers, to quinones in the respiratory chain. The immediate electron acceptor for the enzyme in this species is believed to be ubiquinone. Couples the redox reaction to proton translocation (for every two electrons transferred, four hydrogen ions are translocated across the cytoplasmic membrane), and thus conserves the redox energy in a proton gradient. This chain is NADH-quinone oxidoreductase subunit I, found in Bartonella bacilliformis (strain ATCC 35685 / KC583 / Herrer 020/F12,63).